A 221-amino-acid chain; its full sequence is Urease accessory protein UreG (221 aa).

19-26 (GPVGSGKT) contributes to the GTP binding site.

This sequence belongs to the SIMIBI class G3E GTPase family. UreG subfamily. As to quaternary structure, homodimer. UreD, UreF and UreG form a complex that acts as a GTP-hydrolysis-dependent molecular chaperone, activating the urease apoprotein by helping to assemble the nickel containing metallocenter of UreC. The UreE protein probably delivers the nickel.

It is found in the cytoplasm. Its function is as follows. Facilitates the functional incorporation of the urease nickel metallocenter. This process requires GTP hydrolysis, probably effectuated by UreG. In terms of biological role, expression of the urease operon increases the likelihood of bacterial survival by contributing to acid resistance in vitro and in vivo in BALB/c mice. Y.enterocolitica enters the body via an oral path and must survive the acidic stomach before being able to colonize the intestinal mucosa. The sequence is that of Urease accessory protein UreG from Yersinia enterocolitica.